Here is a 120-residue protein sequence, read N- to C-terminus: Small ribosomal subunit protein uS13 (120 aa).

The disordered stretch occupies residues 96–120 (PCRGQRTRTNARTRKGPRKAIAGKK).

This sequence belongs to the universal ribosomal protein uS13 family. Part of the 30S ribosomal subunit. Forms a loose heterodimer with protein S19. Forms two bridges to the 50S subunit in the 70S ribosome.

Functionally, located at the top of the head of the 30S subunit, it contacts several helices of the 16S rRNA. In the 70S ribosome it contacts the 23S rRNA (bridge B1a) and protein L5 of the 50S subunit (bridge B1b), connecting the 2 subunits; these bridges are implicated in subunit movement. Contacts the tRNAs in the A and P-sites. The polypeptide is Small ribosomal subunit protein uS13 (Chromobacterium violaceum (strain ATCC 12472 / DSM 30191 / JCM 1249 / CCUG 213 / NBRC 12614 / NCIMB 9131 / NCTC 9757 / MK)).